Reading from the N-terminus, the 404-residue chain is MQYSEIMIRYGELSTKGKNRMRFINKLRNNISDVLSIYSQVKVTADRDRAHAYLNGADYTAVAESLKQVFGIQNFSPVYKVEKSVEVLKSSVQEIMRDIYKEGMTFKISSKRSDHNFELDSRELNQTLGGAVFEAIPNVQVQMKSPDINLQVEIREEAAYLSYETIRGAGGLPVGTSGKGMLMLSGGIDSPVAGYLALKRGVDIEAVHFASPPYTSPGALKKAQDLTRKLTKFGGNIQFIEVPFTEIQEEIKAKAPEAYLMTLTRRFMMRITDRIREVRNGLVIINGESLGQVASQTLESMKAINAVTNTPIIRPVVTMDKLEIIDIAQEIDTFDISIQPFEDCCTIFAPDRPKTNPKIKNAEQYEARMDVEGLVERAVAGIMITEITPQAEKDEVDDLIDNLL.

The THUMP domain occupies 60-165; that stretch reads TAVAESLKQV…EEAAYLSYET (106 aa). Residues 183 to 184, 208 to 209, arginine 265, glycine 287, and glutamine 296 each bind ATP; these read ML and HF.

It belongs to the ThiI family.

It is found in the cytoplasm. It carries out the reaction [ThiI sulfur-carrier protein]-S-sulfanyl-L-cysteine + a uridine in tRNA + 2 reduced [2Fe-2S]-[ferredoxin] + ATP + H(+) = [ThiI sulfur-carrier protein]-L-cysteine + a 4-thiouridine in tRNA + 2 oxidized [2Fe-2S]-[ferredoxin] + AMP + diphosphate. It catalyses the reaction [ThiS sulfur-carrier protein]-C-terminal Gly-Gly-AMP + S-sulfanyl-L-cysteinyl-[cysteine desulfurase] + AH2 = [ThiS sulfur-carrier protein]-C-terminal-Gly-aminoethanethioate + L-cysteinyl-[cysteine desulfurase] + A + AMP + 2 H(+). It functions in the pathway cofactor biosynthesis; thiamine diphosphate biosynthesis. Catalyzes the ATP-dependent transfer of a sulfur to tRNA to produce 4-thiouridine in position 8 of tRNAs, which functions as a near-UV photosensor. Also catalyzes the transfer of sulfur to the sulfur carrier protein ThiS, forming ThiS-thiocarboxylate. This is a step in the synthesis of thiazole, in the thiamine biosynthesis pathway. The sulfur is donated as persulfide by IscS. The sequence is that of Probable tRNA sulfurtransferase from Streptococcus pneumoniae serotype 2 (strain D39 / NCTC 7466).